The following is a 227-amino-acid chain: Protein FAM3C (227 aa).

The signal sequence occupies residues 1–30; the sequence is MMRAGGLLKLGVLVSVLFVAVFLAFELLES. 2 cysteine pairs are disulfide-bonded: C58–C86 and C64–C221. A GG-type lectin domain is found at 67-225; that stretch reads DHFAFKITSG…LEMEGCIPIK (159 aa).

It belongs to the FAM3 family.

The protein resides in the secreted. In terms of biological role, involved in retinal laminar formation. This chain is Protein FAM3C (fam3c), found in Danio rerio (Zebrafish).